The chain runs to 55 residues: Probable Rubredoxin-2 (55 aa).

One can recognise a Rubredoxin-like domain in the interval 4–54 (MARYQCMCGWVYDEDKGEPSQNIPPGTKFEDLPDTFRCPQCGLGKNAFRKI). Residues Cys-9, Cys-11, Cys-41, and Cys-44 each contribute to the Fe cation site.

Belongs to the rubredoxin family. Fe(3+) is required as a cofactor.

In terms of biological role, rubredoxin is a small nonheme, iron protein lacking acid-labile sulfide. Its single Fe, chelated to 4 Cys, functions as an electron acceptor and may also stabilize the conformation of the molecule. The polypeptide is Probable Rubredoxin-2 (Methanocaldococcus jannaschii (strain ATCC 43067 / DSM 2661 / JAL-1 / JCM 10045 / NBRC 100440) (Methanococcus jannaschii)).